Consider the following 278-residue polypeptide: Ribosomal RNA small subunit methyltransferase A (278 aa).

S-adenosyl-L-methionine is bound by residues N18, L20, G45, E66, D89, and N110.

The protein belongs to the class I-like SAM-binding methyltransferase superfamily. rRNA adenine N(6)-methyltransferase family. RsmA subfamily.

Its subcellular location is the cytoplasm. The enzyme catalyses adenosine(1518)/adenosine(1519) in 16S rRNA + 4 S-adenosyl-L-methionine = N(6)-dimethyladenosine(1518)/N(6)-dimethyladenosine(1519) in 16S rRNA + 4 S-adenosyl-L-homocysteine + 4 H(+). Specifically dimethylates two adjacent adenosines (A1518 and A1519) in the loop of a conserved hairpin near the 3'-end of 16S rRNA in the 30S particle. May play a critical role in biogenesis of 30S subunits. The sequence is that of Ribosomal RNA small subunit methyltransferase A from Cupriavidus pinatubonensis (strain JMP 134 / LMG 1197) (Cupriavidus necator (strain JMP 134)).